Here is a 142-residue protein sequence, read N- to C-terminus: Large ribosomal subunit protein uL13 (142 aa).

It belongs to the universal ribosomal protein uL13 family. In terms of assembly, part of the 50S ribosomal subunit.

Its function is as follows. This protein is one of the early assembly proteins of the 50S ribosomal subunit, although it is not seen to bind rRNA by itself. It is important during the early stages of 50S assembly. This Buchnera aphidicola subsp. Schizaphis graminum (strain Sg) protein is Large ribosomal subunit protein uL13.